Here is a 262-residue protein sequence, read N- to C-terminus: 5'-nucleotidase SurE (262 aa).

A divalent metal cation contacts are provided by Asp-11, Asp-12, Ser-43, and Asn-101.

This sequence belongs to the SurE nucleotidase family. It depends on a divalent metal cation as a cofactor.

The protein resides in the cytoplasm. The catalysed reaction is a ribonucleoside 5'-phosphate + H2O = a ribonucleoside + phosphate. Functionally, nucleotidase that shows phosphatase activity on nucleoside 5'-monophosphates. This chain is 5'-nucleotidase SurE, found in Prochlorococcus marinus (strain NATL1A).